Reading from the N-terminus, the 408-residue chain is Neutral cholesterol ester hydrolase 1 (408 aa).

Residues 1-4 (MRSS) are Cytoplasmic-facing. Residues 5–25 (CVLLAALLALVAYYVYIPLPS) form a helical; Signal-anchor for type II membrane protein membrane-spanning segment. Residues 26–408 (AVSDPWKLML…SYFKWLDQNL (383 aa)) lie on the Lumenal side of the membrane. The short motif at 113 to 115 (HGG) is the Involved in the stabilization of the negatively charged intermediate by the formation of the oxyanion hole element. Ser-191 is a catalytic residue. Asn-270 carries N-linked (GlcNAc...) asparagine glycosylation. The active site involves Asp-348. Residue Asn-367 is glycosylated (N-linked (GlcNAc...) asparagine). His-378 is a catalytic residue. An N-linked (GlcNAc...) asparagine glycan is attached at Asn-389.

Belongs to the 'GDXG' lipolytic enzyme family. In terms of processing, N-glycosylated.

It is found in the cell membrane. Its subcellular location is the microsome. It carries out the reaction a 1-O-alkyl-2-acetyl-sn-glycerol + H2O = a 1-O-alkyl-sn-glycerol + acetate + H(+). It catalyses the reaction 1-O-hexadecyl-2-acetyl-sn-glycerol + H2O = 1-O-hexadecyl-sn-glycerol + acetate + H(+). The enzyme catalyses a cholesterol ester + H2O = cholesterol + a fatty acid + H(+). The catalysed reaction is cholesteryl (9Z-octadecenoate) + H2O = cholesterol + (9Z)-octadecenoate + H(+). In terms of biological role, hydrolyzes 2-acetyl monoalkylglycerol ether (1-O-alkyl-2-acetyl-sn-glycerol), the penultimate precursor of the pathway for de novo synthesis of platelet-activating factor. May be responsible for the hydrolysis of cholesterol esters (such as cholesteryl (9Z-octadecenoate)) in macrophages. Also involved in organ detoxification by hydrolyzing exogenous organophosphorus compounds. This is Neutral cholesterol ester hydrolase 1 (Nceh1) from Rattus norvegicus (Rat).